The following is a 754-amino-acid chain: 5-methyltetrahydropteroyltriglutamate--homocysteine methyltransferase (754 aa).

Residues 17 to 20 (RELK) and lysine 117 contribute to the 5-methyltetrahydropteroyltri-L-glutamate site. L-homocysteine-binding positions include 431–433 (IGS) and glutamate 484. L-methionine is bound by residues 431-433 (IGS) and glutamate 484. Residues 515-516 (RC) and tryptophan 561 contribute to the 5-methyltetrahydropteroyltri-L-glutamate site. Aspartate 599 serves as a coordination point for L-homocysteine. Residue aspartate 599 coordinates L-methionine. Residue glutamate 605 participates in 5-methyltetrahydropteroyltri-L-glutamate binding. 3 residues coordinate Zn(2+): histidine 641, cysteine 643, and glutamate 665. Catalysis depends on histidine 694, which acts as the Proton donor. Cysteine 726 contacts Zn(2+).

The protein belongs to the vitamin-B12 independent methionine synthase family. Requires Zn(2+) as cofactor.

It catalyses the reaction 5-methyltetrahydropteroyltri-L-glutamate + L-homocysteine = tetrahydropteroyltri-L-glutamate + L-methionine. It participates in amino-acid biosynthesis; L-methionine biosynthesis via de novo pathway; L-methionine from L-homocysteine (MetE route): step 1/1. Catalyzes the transfer of a methyl group from 5-methyltetrahydrofolate to homocysteine resulting in methionine formation. In Pectobacterium atrosepticum (strain SCRI 1043 / ATCC BAA-672) (Erwinia carotovora subsp. atroseptica), this protein is 5-methyltetrahydropteroyltriglutamate--homocysteine methyltransferase.